Reading from the N-terminus, the 1063-residue chain is Integrin alpha-8 (1063 aa).

Positions 1-38 are cleaved as a signal peptide; that stretch reads MSPGASRGPRGSQAPLIAPLCCAAAALGMLLWSPACQA. The Extracellular portion of the chain corresponds to 39–1012; that stretch reads FNLDVEKLTV…TPNVSFSIPL (974 aa). FG-GAP repeat units lie at residues 44–105, 122–183, 188–240, 253–306, 307–372, 373–431, and 435–498; these read EKLT…GSAQ, NGTK…AYAE, RNSN…IANY, KQTE…STDM, TFIQ…LLFR, DPQI…GLNT, and QVLQ…LHPM. A glycan (N-linked (GlcNAc...) asparagine) is linked at asparagine 81. Cysteine 96 and cysteine 106 are joined by a disulfide. Asparagine 122 is a glycosylation site (N-linked (GlcNAc...) asparagine). Cysteine 150 and cysteine 171 are oxidised to a cystine. Asparagine 177 carries an N-linked (GlcNAc...) asparagine glycan. Cysteine 187 and cysteine 200 are joined by a disulfide. Asparagine 239 carries an N-linked (GlcNAc...) asparagine glycan. Ca(2+) contacts are provided by glutamate 275, threonine 277, aspartate 279, and glutamate 283. N-linked (GlcNAc...) asparagine glycosylation is found at asparagine 302 and asparagine 311. Residues aspartate 329, asparagine 331, aspartate 333, leucine 335, aspartate 337, aspartate 395, asparagine 397, aspartate 399, tyrosine 401, and aspartate 403 each contribute to the Ca(2+) site. Residues 455–457 carry the Cell attachment site motif; it reads RGD. Aspartate 459, aspartate 461, asparagine 463, tyrosine 465, and aspartate 467 together coordinate Ca(2+). Asparagine 504 carries an N-linked (GlcNAc...) asparagine glycan. 2 disulfide bridges follow: cysteine 507/cysteine 518 and cysteine 524/cysteine 580. N-linked (GlcNAc...) asparagine glycosylation is found at asparagine 601 and asparagine 605. Disulfide bonds link cysteine 641–cysteine 647 and cysteine 713–cysteine 726. 6 N-linked (GlcNAc...) asparagine glycosylation sites follow: asparagine 719, asparagine 737, asparagine 753, asparagine 780, asparagine 896, and asparagine 923. 2 disulfides stabilise this stretch: cysteine 867–cysteine 924 and cysteine 929–cysteine 934. Asparagine 1005 carries an N-linked (GlcNAc...) asparagine glycan. Residues 1013 to 1033 traverse the membrane as a helical segment; that stretch reads WVIILAILLGLLVLAILTLAL. Residues 1034-1063 lie on the Cytoplasmic side of the membrane; it reads WKCGFFDRARPPQEDMTDREQLTNDKTPEA.

It belongs to the integrin alpha chain family. Heterodimer of an alpha and a beta subunit. The alpha subunit is composed of a heavy and a light chain linked by a disulfide bond. Alpha-8 associates with beta-1. As to expression, expressed in mesenchymal cells, including alveolar myofibroblasts, kidney mesangial cells and hepatic stellar cells and vascular and visceral smooth muscle (at protein level).

Its subcellular location is the membrane. The protein resides in the cell membrane. Functionally, integrin alpha-8/beta-1 functions in the genesis of kidney and probably of other organs by regulating the recruitment of mesenchymal cells into epithelial structures. It recognizes the sequence R-G-D in a wide array of ligands including TNC, FN1, SPP1 TGFB1, TGFB3 and VTN. NPNT is probably its functional ligand in kidney genesis. Neuronal receptor for TNC it mediates cell-cell interactions and regulates neurite outgrowth of sensory and motor neurons. The sequence is that of Integrin alpha-8 (ITGA8) from Homo sapiens (Human).